The primary structure comprises 129 residues: uncharacterized protein (129 aa).

The first 21 residues, 1-21 (MAQNKTIAVALLLATLVAVMG), serve as a signal peptide directing secretion.

This is an uncharacterized protein from Oryza sativa subsp. japonica (Rice).